The primary structure comprises 242 residues: 7-cyano-7-deazaguanine synthase (242 aa).

Position 12–22 (12–22 (FSGGQDSTTCL)) interacts with ATP. The Zn(2+) site is built by cysteine 200, cysteine 215, cysteine 218, and cysteine 221.

Belongs to the QueC family. Zn(2+) is required as a cofactor.

It carries out the reaction 7-carboxy-7-deazaguanine + NH4(+) + ATP = 7-cyano-7-deazaguanine + ADP + phosphate + H2O + H(+). It participates in purine metabolism; 7-cyano-7-deazaguanine biosynthesis. Its function is as follows. Catalyzes the ATP-dependent conversion of 7-carboxy-7-deazaguanine (CDG) to 7-cyano-7-deazaguanine (preQ(0)). The protein is 7-cyano-7-deazaguanine synthase of Nitratidesulfovibrio vulgaris (strain ATCC 29579 / DSM 644 / CCUG 34227 / NCIMB 8303 / VKM B-1760 / Hildenborough) (Desulfovibrio vulgaris).